The following is a 301-amino-acid chain: 4-diphosphocytidyl-2-C-methyl-D-erythritol kinase (301 aa).

Lys-18 is an active-site residue. An ATP-binding site is contributed by 109–119 (PIASGIGGGSA). The active site involves Asp-151.

The protein belongs to the GHMP kinase family. IspE subfamily.

The enzyme catalyses 4-CDP-2-C-methyl-D-erythritol + ATP = 4-CDP-2-C-methyl-D-erythritol 2-phosphate + ADP + H(+). Its pathway is isoprenoid biosynthesis; isopentenyl diphosphate biosynthesis via DXP pathway; isopentenyl diphosphate from 1-deoxy-D-xylulose 5-phosphate: step 3/6. In terms of biological role, catalyzes the phosphorylation of the position 2 hydroxy group of 4-diphosphocytidyl-2C-methyl-D-erythritol. The chain is 4-diphosphocytidyl-2-C-methyl-D-erythritol kinase from Rhizobium meliloti (strain 1021) (Ensifer meliloti).